A 748-amino-acid polypeptide reads, in one-letter code: Putative pre-mRNA-splicing factor ATP-dependent RNA helicase DHX32 (748 aa).

Positions Leu74 to Glu240 constitute a Helicase ATP-binding domain. An ATP-binding site is contributed by Ala87–Ser94. Residues Arg263–Asp439 form the Helicase C-terminal domain. Positions Ser706–Gln748 are disordered.

It belongs to the DEAD box helicase family. DEAH subfamily.

It localises to the nucleus. It is found in the mitochondrion. The enzyme catalyses ATP + H2O = ADP + phosphate + H(+). This chain is Putative pre-mRNA-splicing factor ATP-dependent RNA helicase DHX32 (dhx32), found in Xenopus laevis (African clawed frog).